An 85-amino-acid chain; its full sequence is MSYQQQQCKQPCQPPPVCPPKKCPEPCPPLKCPEPCPPPKCPEPCPPPKCPEPCPEPCPPPSCQQKCPPAQPPPPCQQKCPPKSK.

Positions 1–11 (MSYQQQQCKQP) are enriched in low complexity. The tract at residues 1–20 (MSYQQQQCKQPCQPPPVCPP) is disordered. 4 consecutive repeat copies span residues 21-29 (KKCPEPCPP), 30-38 (LKCPEPCPP), 39-47 (PKCPEPCPP), and 48-56 (PKCPEPCPE). Positions 21–56 (KKCPEPCPPLKCPEPCPPPKCPEPCPPPKCPEPCPE) are 4 X 9 AA approximate tandem repeats. Positions 57 to 85 (PCPPPSCQQKCPPAQPPPPCQQKCPPKSK) are disordered.

This sequence belongs to the cornifin (SPRR) family. As to expression, expressed in uterus.

The protein localises to the cytoplasm. Cross-linked envelope protein of keratinocytes. It is a keratinocyte protein that first appears in the cell cytosol, but ultimately becomes cross-linked to membrane proteins by transglutaminase. All that results in the formation of an insoluble envelope beneath the plasma membrane. This Mus musculus (Mouse) protein is Small proline-rich protein 2D (Sprr2d).